Consider the following 348-residue polypeptide: MTQFNPVDHPHRRYNPLTGQWILVSPHRAKRPWQGAQETPAKQVLPAHDPDCFLCAGNVRVTGDKNPDYTGTYVFTNDFAALMSDTPDAPESHDPLMRCQSARGTSRVICFSPDHSKTLPELSVAALTEIVKTWQEQTAELGKTYPWVQVFENKGAAMGCSNPHPHGQIWANSFLPNEAEREDRLQKEYFAEQKSPMLVDYVQRELADGSRTVVETEHWLAVVPYWAAWPFETLLLPKAHVLRITDLTDAQRSDLALALKKLTSRYDNLFQCSFPYSMGWHGAPFNGEENQHWQLHAHFYPPLLRSATVRKFMVGYEMLAETQRDLTAEQAAERLRAVSDIHFRESGV.

Arg28–Arg31 serves as a coordination point for UDP-alpha-D-glucose. Zn(2+)-binding residues include Cys52 and Cys55. Residues Val61 and Asn77–Asp78 contribute to the UDP-alpha-D-glucose site. His115 is a binding site for Zn(2+). UDP-alpha-D-glucose contacts are provided by residues Asn153 and Gly159–Ser161. His164 contributes to the Zn(2+) binding site. Catalysis depends on His166, which acts as the Tele-UMP-histidine intermediate. Gln168 provides a ligand contact to UDP-alpha-D-glucose. The Fe cation site is built by Glu182, His281, His296, and His298. Residues Lys311 to Phe312, Tyr316 to Glu317, and Gln323 each bind UDP-alpha-D-glucose.

Belongs to the galactose-1-phosphate uridylyltransferase type 1 family. As to quaternary structure, homodimer. Zn(2+) serves as cofactor.

It catalyses the reaction alpha-D-galactose 1-phosphate + UDP-alpha-D-glucose = alpha-D-glucose 1-phosphate + UDP-alpha-D-galactose. It participates in carbohydrate metabolism; galactose metabolism. This chain is Galactose-1-phosphate uridylyltransferase (galT), found in Escherichia coli (strain K12).